A 298-amino-acid chain; its full sequence is Iron-regulated virulence regulatory protein IrgB (298 aa).

The region spanning 1–59 is the HTH lysR-type domain; sequence MQDLSAVKAFHALCQHKSLTAAAKALEQPKSTLSRRLAQLEEDLGQSLLMRQGNRLTLT. The segment at residues 19–38 is a DNA-binding region (H-T-H motif); sequence LTAAAKALEQPKSTLSRRLA.

This sequence belongs to the LysR transcriptional regulatory family.

Transcription activation of the irgA gene. In the presence of sufficient iron, transcription of both irgA and irgB is negatively regulated by a fur-like protein. In low iron conditions, negative regulation of transcription is removed, and production of irgB leads to positive transcriptional activation of irgA. The polypeptide is Iron-regulated virulence regulatory protein IrgB (irgB) (Vibrio cholerae serotype O1 (strain ATCC 39315 / El Tor Inaba N16961)).